The chain runs to 331 residues: Glucokinase (331 aa).

ATP is bound at residue glycine 16–threonine 21.

It belongs to the bacterial glucokinase family.

The protein resides in the cytoplasm. It carries out the reaction D-glucose + ATP = D-glucose 6-phosphate + ADP + H(+). The protein is Glucokinase of Pseudomonas aeruginosa (strain UCBPP-PA14).